The primary structure comprises 614 residues: Protein B602L (614 aa).

31 repeat units span residues 161–164 (CAST), 165–168 (NADT), 169–172 (SAST), 173–176 (NADT), 177–180 (SAST), 181–184 (NASI), 185–188 (NADT), 189–192 (NVDT), 193–196 (CAST), 197–200 (NAST), 201–204 (NVDT), 205–208 (NASI), 209–212 (NAST), 213–216 (NAST), 217–220 (NVDT), 221–224 (NAST), 225–228 (NASI), 229–232 (NADT), 233–236 (NVDT), 237–240 (CAST), 241–244 (NAST), 245–248 (NVDT), 249–252 (NASI), 253–256 (NAST), 257–260 (NAST), 261–264 (NVDT), 265–268 (NADI), 269–272 (NANT), 273–276 (NADI), 277–280 (NANI), and 281–284 (NANT). The tract at residues 161 to 284 (CASTNADTSA…DINANINANT (124 aa)) is 28 X 4 AA tandem repeats of [CNS]-[AV]-[DNS]-[IT].

This sequence belongs to the asfivirus B602L family.

The protein resides in the host cytoplasm. Functionally, plays an essential role in the assembly of the icosahedral capsid of the virus. Allows the assembly of 3 molecules of hexon protein p72 and formation of a thermostable trimer. The chain is Protein B602L from African swine fever virus (isolate Tick/Malawi/Lil 20-1/1983) (ASFV).